Reading from the N-terminus, the 465-residue chain is UDP-N-acetylmuramate--L-alanine ligase (465 aa).

118–124 (GTHGKTT) contacts ATP.

It belongs to the MurCDEF family.

The protein resides in the cytoplasm. The enzyme catalyses UDP-N-acetyl-alpha-D-muramate + L-alanine + ATP = UDP-N-acetyl-alpha-D-muramoyl-L-alanine + ADP + phosphate + H(+). The protein operates within cell wall biogenesis; peptidoglycan biosynthesis. Its function is as follows. Cell wall formation. The polypeptide is UDP-N-acetylmuramate--L-alanine ligase (Ruegeria pomeroyi (strain ATCC 700808 / DSM 15171 / DSS-3) (Silicibacter pomeroyi)).